A 171-amino-acid polypeptide reads, in one-letter code: MAEKRNIFLVGPMGAGKSTIGRHLAQMLHLEFHDSDQEIEQRTGADIAWVFDVEGEEGFRRREAQVIADLSEKQGIVLATGGGSVQSKDIRNHLSARGIVVYLETTIDKQVARTQRDKRRPLLQVDDPREVLENLAEIRNPLYEEIADVIVKTDDQSAKVVANQIIEKLGF.

ATP is bound at residue G14–T19. Residue S18 participates in Mg(2+) binding. 3 residues coordinate substrate: D36, R60, and G82. R120 contributes to the ATP binding site. R139 contributes to the substrate binding site. Q156 is a binding site for ATP.

This sequence belongs to the shikimate kinase family. In terms of assembly, monomer. The cofactor is Mg(2+).

The protein localises to the cytoplasm. It carries out the reaction shikimate + ATP = 3-phosphoshikimate + ADP + H(+). It participates in metabolic intermediate biosynthesis; chorismate biosynthesis; chorismate from D-erythrose 4-phosphate and phosphoenolpyruvate: step 5/7. In terms of biological role, catalyzes the specific phosphorylation of the 3-hydroxyl group of shikimic acid using ATP as a cosubstrate. This chain is Shikimate kinase, found in Shewanella sp. (strain MR-4).